The chain runs to 367 residues: Probable butyrate kinase (367 aa).

It belongs to the acetokinase family.

It is found in the cytoplasm. It catalyses the reaction butanoate + ATP = butanoyl phosphate + ADP. The protein is Probable butyrate kinase of Bacillus cereus (strain ATCC 10987 / NRS 248).